Consider the following 827-residue polypeptide: Periplasmic nitrate reductase (827 aa).

Positions 1–32 form a signal peptide, tat-type signal; that stretch reads MELNRRDFMKANAAMAAAAAAGMTIPVKNVYA. The 4Fe-4S Mo/W bis-MGD-type domain occupies 37–93; the sequence is IRWDKAPCRFCGTGCSVLVGTKDGRVVATQGDPDAEVNRGLNCIKGYFLSKIMYGAD. [4Fe-4S] cluster-binding residues include cysteine 44, cysteine 47, cysteine 51, and cysteine 79. Mo-bis(molybdopterin guanine dinucleotide)-binding positions include lysine 81, glutamine 148, asparagine 173, cysteine 177, 210-217, 241-245, methionine 371, glutamine 375, asparagine 481, 507-508, lysine 530, aspartate 557, and 717-726; these read WGSNMAEM, STFEH, SD, and TGRVLEHWHT. Phenylalanine 793 is a substrate binding site. Mo-bis(molybdopterin guanine dinucleotide)-binding residues include asparagine 801 and lysine 818.

It belongs to the prokaryotic molybdopterin-containing oxidoreductase family. NasA/NapA/NarB subfamily. In terms of assembly, component of the periplasmic nitrate reductase NapAB complex composed of NapA and NapB. Requires [4Fe-4S] cluster as cofactor. It depends on Mo-bis(molybdopterin guanine dinucleotide) as a cofactor. In terms of processing, predicted to be exported by the Tat system. The position of the signal peptide cleavage has not been experimentally proven.

It is found in the periplasm. It catalyses the reaction 2 Fe(II)-[cytochrome] + nitrate + 2 H(+) = 2 Fe(III)-[cytochrome] + nitrite + H2O. Functionally, catalytic subunit of the periplasmic nitrate reductase complex NapAB. Receives electrons from NapB and catalyzes the reduction of nitrate to nitrite. This Actinobacillus pleuropneumoniae serotype 7 (strain AP76) protein is Periplasmic nitrate reductase.